Reading from the N-terminus, the 384-residue chain is Monomethylxanthine methyltransferase 2 (384 aa).

Positions 18, 61, 66, 100, 101, 139, 140, and 156 each coordinate S-adenosyl-L-homocysteine. Positions 157, 160, and 161 each coordinate theobromine. Mg(2+) is bound by residues asparagine 178, phenylalanine 262, and asparagine 263. Residue tyrosine 368 coordinates theobromine.

The protein belongs to the methyltransferase superfamily. Type-7 methyltransferase family. It depends on Mg(2+) as a cofactor. Expressed, at low levels, in young leaves, floral buds and immature fruits (grains), but not in old leaves and mature fruits. Highly expressed in developing endosperm and flower buds. Detected in young leaves.

The catalysed reaction is 7-methylxanthine + S-adenosyl-L-methionine = theobromine + S-adenosyl-L-homocysteine + H(+). It participates in alkaloid biosynthesis. Its function is as follows. Involved in the biosynthesis of caffeine. Catalyzes the conversion of 7-methylxanthine (7mX) to theobromine and with a lower activity of paraxanthine to caffeine. Does not have 1-N-methylation activity. The protein is Monomethylxanthine methyltransferase 2 of Coffea arabica (Arabian coffee).